The primary structure comprises 417 residues: 3-ketoacyl-CoA thiolase, peroxisomal (417 aa).

Residues 1–15 (MSQRLQSIKDHLVES) constitute a peroxisome transit peptide. Residues 1–15 (MSQRLQSIKDHLVES) form a PTS2-type peroxisomal targeting signal region. C125 functions as the Acyl-thioester intermediate in the catalytic mechanism. Residues H375 and C403 each act as proton acceptor in the active site.

This sequence belongs to the thiolase-like superfamily. Thiolase family. Homodimer. Interacts (via PTS2-type peroxisomal targeting signal region) with PEX7; leading to its translocation into peroxisomes.

The protein resides in the peroxisome. It is found in the mitochondrion intermembrane space. The enzyme catalyses an acyl-CoA + acetyl-CoA = a 3-oxoacyl-CoA + CoA. Its pathway is lipid metabolism; fatty acid metabolism. In terms of biological role, responsible for the thiolytic cleavage of straight chain 3-keto fatty acyl-CoAs (3-oxoacyl-CoAs). The chain is 3-ketoacyl-CoA thiolase, peroxisomal (POT1) from Saccharomyces cerevisiae (strain ATCC 204508 / S288c) (Baker's yeast).